A 232-amino-acid chain; its full sequence is 2,3,4,5-tetrahydropyridine-2,6-dicarboxylate N-acetyltransferase (232 aa).

Belongs to the transferase hexapeptide repeat family. DapH subfamily.

The enzyme catalyses (S)-2,3,4,5-tetrahydrodipicolinate + acetyl-CoA + H2O = L-2-acetamido-6-oxoheptanedioate + CoA. It participates in amino-acid biosynthesis; L-lysine biosynthesis via DAP pathway; LL-2,6-diaminopimelate from (S)-tetrahydrodipicolinate (acetylase route): step 1/3. Functionally, catalyzes the transfer of an acetyl group from acetyl-CoA to tetrahydrodipicolinate. This Streptococcus pneumoniae serotype 2 (strain D39 / NCTC 7466) protein is 2,3,4,5-tetrahydropyridine-2,6-dicarboxylate N-acetyltransferase.